A 152-amino-acid chain; its full sequence is UPF0336 protein Tfu_2666 (152 aa).

Positions 7–116 constitute a MaoC-like domain; the sequence is YLGRAYELPE…TTITDIKSLA (110 aa).

Belongs to the UPF0336 family.

The polypeptide is UPF0336 protein Tfu_2666 (Thermobifida fusca (strain YX)).